The sequence spans 316 residues: Cytochrome c oxidase assembly protein COX18, mitochondrial (316 aa).

Residues 164–184 (WKNALLPMVQIPLWVTVSMGI) traverse the membrane as a helical segment. The Mitochondrial matrix segment spans residues 185–213 (RTLTETQLIESFYPSWFSALGFSSFDLSS). A helical transmembrane segment spans residues 214–234 (PLVAMPLLAPILVGTLAVLNV). Topologically, residues 235–274 (ELNGRLMFSSSLSSQGIKTISRNSTRVQEAMTSILNVSRL) are mitochondrial intermembrane. A helical transmembrane segment spans residues 275 to 295 (GCVVMLAMSSQAPFLLSLYWI). Over 296–316 (SSQLFSLVQNIILNWIYPYQR) the chain is Mitochondrial matrix.

The protein belongs to the OXA1/ALB3/YidC family. As to quaternary structure, interacts with PNT1 and MSS2.

It is found in the mitochondrion inner membrane. Functionally, required for the insertion of integral membrane proteins into the mitochondrial inner membrane. Essential for the activity and assembly of cytochrome c oxidase. Plays a central role in the translocation and export of the C-terminal part of the COX2 protein into the mitochondrial intermembrane space. In Saccharomyces cerevisiae (strain ATCC 204508 / S288c) (Baker's yeast), this protein is Cytochrome c oxidase assembly protein COX18, mitochondrial (COX18).